The chain runs to 356 residues: Glutamine synthetase (356 aa).

In terms of domain architecture, GS beta-grasp spans 19–99 (VIAEYIWIGG…VICDTYTPAG (81 aa)). Residues 106 to 356 (KRHGAAKIFS…IAETTLLWKP (251 aa)) enclose the GS catalytic domain.

This sequence belongs to the glutamine synthetase family. Homooctamer. In terms of tissue distribution, found at highest levels in root nodules.

The protein localises to the cytoplasm. The catalysed reaction is L-glutamate + NH4(+) + ATP = L-glutamine + ADP + phosphate + H(+). This is Glutamine synthetase (GLN1) from Alnus glutinosa (European alder).